Here is a 253-residue protein sequence, read N- to C-terminus: 5'/3'-nucleotidase SurE (253 aa).

A divalent metal cation-binding residues include Asp8, Asp9, Ser39, and Asn92.

It belongs to the SurE nucleotidase family. A divalent metal cation serves as cofactor.

It is found in the cytoplasm. It carries out the reaction a ribonucleoside 5'-phosphate + H2O = a ribonucleoside + phosphate. The catalysed reaction is a ribonucleoside 3'-phosphate + H2O = a ribonucleoside + phosphate. The enzyme catalyses [phosphate](n) + H2O = [phosphate](n-1) + phosphate + H(+). Nucleotidase with a broad substrate specificity as it can dephosphorylate various ribo- and deoxyribonucleoside 5'-monophosphates and ribonucleoside 3'-monophosphates with highest affinity to 3'-AMP. Also hydrolyzes polyphosphate (exopolyphosphatase activity) with the preference for short-chain-length substrates (P20-25). Might be involved in the regulation of dNTP and NTP pools, and in the turnover of 3'-mononucleotides produced by numerous intracellular RNases (T1, T2, and F) during the degradation of various RNAs. This chain is 5'/3'-nucleotidase SurE, found in Shigella flexneri serotype 5b (strain 8401).